The following is a 426-amino-acid chain: COMPASS component SWD1 (426 aa).

WD repeat units follow at residues 24 to 63, 70 to 109, 212 to 251, 264 to 307, and 310 to 350; these read ENPLRTECLQFSPCGDYLALGCANGALVIYDMDTFRPICV, AHVRPITSIAWSPDGRLLLTSSRDWSIKLWDLSKPSKPLK, ITSSNIKHLIVSQNGERLAINCSDRTIRQYEISIDDENSA, INKL…LVRV, and GAEE…KWSA. DNA-binding residues include Arg-236 and Lys-266.

As to quaternary structure, component of the Set1C/COMPASS complex which consists of SET1(2), BRE2(2), SPP1(2), SDC1(1), SHG1(1), SWD1(1), SWD2(1), and SWD3(1).

The protein localises to the nucleus. It is found in the chromosome. It localises to the telomere. Functionally, component of the Set1C/COMPASS complex that specifically mono-, di- and trimethylates histone H3 to form H3K4me1/2/3, which subsequently plays a role in telomere length maintenance and transcription elongation regulation. COMPASS recognizes ubiquitinated H2B on one face of the nucleosome which stimulates the methylation of H3 on the opposing face. SWD1/CPS50 acts as an assembly and regulatory hub for COMPASS complex formation. Serves as a highly utilized surface for COMPASS interaction with the nucleosome. In Saccharomyces cerevisiae (strain ATCC 204508 / S288c) (Baker's yeast), this protein is COMPASS component SWD1.